We begin with the raw amino-acid sequence, 213 residues long: MKKLLKQSLLGFALVSMTGAAFADAQSVAELQRRLEQVSQYSADFDQTVRSSKGKQIQSGKGKFQVKRPNLFRMDTKSPQENLIVSDGANLWFYDPFVSQVTVNTVQDAVNNTPFVLLTSSDKSHWDQYDVTQNADTFVLKPKSKKSNLKQFDVRIDQSGMLKGFSTIERDGQSNLYVLRNITGGGVSSDLFKFSVPKGAELDDQRGGKKSKK.

The signal sequence occupies residues 1–23 (MKKLLKQSLLGFALVSMTGAAFA).

This sequence belongs to the LolA family. As to quaternary structure, monomer.

It localises to the periplasm. Participates in the translocation of lipoproteins from the inner membrane to the outer membrane. Only forms a complex with a lipoprotein if the residue after the N-terminal Cys is not an aspartate (The Asp acts as a targeting signal to indicate that the lipoprotein should stay in the inner membrane). The polypeptide is Outer-membrane lipoprotein carrier protein (Actinobacillus pleuropneumoniae serotype 7 (strain AP76)).